The sequence spans 646 residues: uncharacterized protein (646 aa).

A run of 8 helical transmembrane segments spans residues 20-42 (ILSR…LYLL), 55-77 (FLAG…IHQV), 97-115 (LLHF…HYML), 127-149 (YTFD…FSYW), 159-181 (IAFV…FFKL), 188-206 (ILLG…LLLA), 216-238 (YGAV…YHLF), and 251-273 (WVTM…IGTA).

It localises to the cell membrane. This is an uncharacterized protein from Bacillus subtilis (strain 168).